The following is a 137-amino-acid chain: Small heat shock protein IbpA (137 aa).

One can recognise a sHSP domain in the interval 28–137; sequence TQSNGGYPPY…AMKPRRIEIK (110 aa).

This sequence belongs to the small heat shock protein (HSP20) family. As to quaternary structure, monomer. Forms homomultimers of about 100-150 subunits at optimal growth temperatures. Conformation changes to monomers at high temperatures or high ionic concentrations.

It localises to the cytoplasm. Its function is as follows. Associates with aggregated proteins, together with IbpB, to stabilize and protect them from irreversible denaturation and extensive proteolysis during heat shock and oxidative stress. Aggregated proteins bound to the IbpAB complex are more efficiently refolded and reactivated by the ATP-dependent chaperone systems ClpB and DnaK/DnaJ/GrpE. Its activity is ATP-independent. The chain is Small heat shock protein IbpA from Pectobacterium atrosepticum (strain SCRI 1043 / ATCC BAA-672) (Erwinia carotovora subsp. atroseptica).